We begin with the raw amino-acid sequence, 255 residues long: Small ribosomal subunit protein uS2 (255 aa).

This sequence belongs to the universal ribosomal protein uS2 family.

This Geotalea daltonii (strain DSM 22248 / JCM 15807 / FRC-32) (Geobacter daltonii) protein is Small ribosomal subunit protein uS2.